A 118-amino-acid chain; its full sequence is HTH-type transcriptional regulator SarT (118 aa).

Positions 55–78 (MRDIISYIGIDQSRIVKSVKELSK) form a DNA-binding region, H-T-H motif.

The protein belongs to the SarA family.

Its subcellular location is the cytoplasm. Functionally, transcriptional regulator acting as an intermediary between major regulators SarA and agr and virulence genes. Represses alpha-hemolysin (hla) gene expression. This Staphylococcus aureus (strain Mu50 / ATCC 700699) protein is HTH-type transcriptional regulator SarT (sarT).